A 171-amino-acid chain; its full sequence is Small ribosomal subunit protein uS13 (171 aa).

Disordered regions lie at residues 1–22 and 142–171; these read MGKA…AAKK and RHEK…RKKE. Residues 10-22 show a composition bias toward basic and acidic residues; the sequence is KSDKEAAKPAAKK. Positions 142–158 are enriched in basic residues; it reads RHEKGKKVRGQRTRSNG.

The protein belongs to the universal ribosomal protein uS13 family. Part of the 30S ribosomal subunit. Forms a loose heterodimer with protein S19. Forms two bridges to the 50S subunit in the 70S ribosome.

Functionally, located at the top of the head of the 30S subunit, it contacts several helices of the 16S rRNA. In the 70S ribosome it contacts the 23S rRNA (bridge B1a) and protein L5 of the 50S subunit (bridge B1b), connecting the 2 subunits; these bridges are implicated in subunit movement. This chain is Small ribosomal subunit protein uS13, found in Thermoplasma volcanium (strain ATCC 51530 / DSM 4299 / JCM 9571 / NBRC 15438 / GSS1).